Consider the following 608-residue polypeptide: UvrABC system protein C (608 aa).

A GIY-YIG domain is found at 13 to 91 (HDPGVYRMFD…IKTFQPRYNV (79 aa)). The UVR domain occupies 201–236 (QQVLDHLIAKMETASRALDFENAARFRDQIQAVRAV).

Belongs to the UvrC family. In terms of assembly, interacts with UvrB in an incision complex.

It is found in the cytoplasm. Functionally, the UvrABC repair system catalyzes the recognition and processing of DNA lesions. UvrC both incises the 5' and 3' sides of the lesion. The N-terminal half is responsible for the 3' incision and the C-terminal half is responsible for the 5' incision. This Actinobacillus succinogenes (strain ATCC 55618 / DSM 22257 / CCUG 43843 / 130Z) protein is UvrABC system protein C.